The sequence spans 591 residues: Adsorption protein P2 (591 aa).

Cys-254 and Cys-277 form a disulfide bridge.

The protein resides in the virion. In terms of biological role, adsorption protein. In association with P31 and trimeric P5, forms the spike complexes located at the 5-fold vertices of the capsid. Involved in recognition and attachment to the receptor on the surface of the host. Likely triggers the processes of vertex disassembly, membrane tube formation, and subsequent DNA injection. Essential for viral infectivity. The protein is Adsorption protein P2 (II) of Acinetobacter calcoaceticus (Arthrobacter siderocapsulatus).